The chain runs to 196 residues: Secreted effector protein SseB (196 aa).

It belongs to the EspA/SseB family. May form a complex with SseC and SseD. Binds to the chaperone SseA.

It localises to the secreted. The protein resides in the cell surface. Functionally, effector proteins function to alter host cell physiology and promote bacterial survival in host tissues. May act as a translocator that mediates translocation of SPI-2 T3SS effector proteins from intraphagosomal bacterial cells into the host cells. SseB is required for correct localization of SseC and SseD on the bacterial cell surface. In Salmonella typhimurium (strain LT2 / SGSC1412 / ATCC 700720), this protein is Secreted effector protein SseB (sseB).